A 277-amino-acid polypeptide reads, in one-letter code: Diaminopimelate epimerase (277 aa).

Substrate-binding residues include Asn13, Gln46, and Asn66. The active-site Proton donor is the Cys75. Residues 76–77, Asn160, Asn193, and 211–212 contribute to the substrate site; these read GN and ER. The active-site Proton acceptor is the Cys220. 221 to 222 contacts substrate; that stretch reads GS.

Belongs to the diaminopimelate epimerase family. As to quaternary structure, homodimer.

The protein resides in the cytoplasm. It catalyses the reaction (2S,6S)-2,6-diaminopimelate = meso-2,6-diaminopimelate. It participates in amino-acid biosynthesis; L-lysine biosynthesis via DAP pathway; DL-2,6-diaminopimelate from LL-2,6-diaminopimelate: step 1/1. Its function is as follows. Catalyzes the stereoinversion of LL-2,6-diaminopimelate (L,L-DAP) to meso-diaminopimelate (meso-DAP), a precursor of L-lysine and an essential component of the bacterial peptidoglycan. This Legionella pneumophila (strain Paris) protein is Diaminopimelate epimerase.